Here is a 76-residue protein sequence, read N- to C-terminus: Amyloid protein A (76 aa).

This sequence belongs to the SAA family. Expressed by the liver; secreted in plasma.

The protein localises to the secreted. Its function is as follows. Major acute phase reactant. Apolipoprotein of the HDL complex. The sequence is that of Amyloid protein A (SAA1) from Macaca mulatta (Rhesus macaque).